Reading from the N-terminus, the 148-residue chain is Protein PLANT CADMIUM RESISTANCE 9 (148 aa).

Residues 59-78 (LAGLMVVAMSSIGCGWYYAS) traverse the membrane as a helical segment.

This sequence belongs to the cornifelin family.

The protein resides in the membrane. Its function is as follows. May be involved in cadmium resistance. In Arabidopsis thaliana (Mouse-ear cress), this protein is Protein PLANT CADMIUM RESISTANCE 9 (PCR9).